The chain runs to 284 residues: MQREFVSGAGLGLRRALLEPLGAGDGVRVDFLEVAPENWIGIGGRLGRQFRELTERLPFLCHGLSLNLGGYAPLDMSLLRAIKGFIEQHDIRAYSEHLSACADDGQLYDLMPLPFSDESVRRVAERVRVVQDVLERPLIVENVSAYARLPGELEEVDFVRAVLEEADCQLLLDVNNVYVNACNFGFDAHAYIAAMPSRRIAYLHMAGHDEQGASLKIDTHGAPVCDPVWELLAHAYACHGERPTLLERDFNLPPLSELYAETDRIRELQRRSGEAQLRSLGYGT.

Belongs to the UPF0276 family.

In Pseudomonas aeruginosa (strain ATCC 15692 / DSM 22644 / CIP 104116 / JCM 14847 / LMG 12228 / 1C / PRS 101 / PAO1), this protein is UPF0276 protein PA3283.